We begin with the raw amino-acid sequence, 108 residues long: uncharacterized protein (108 aa).

The N-linked (GlcNAc...) asparagine glycan is linked to asparagine 33.

In terms of processing, N-glycosylated.

This is an uncharacterized protein from Saccharomyces cerevisiae (strain ATCC 204508 / S288c) (Baker's yeast).